The following is a 609-amino-acid chain: Large ribosomal subunit assembly factor BipA (609 aa).

The region spanning 3 to 198 (QNIRNIAIIA…AIIKYAPAPN (196 aa)) is the tr-type G domain. GTP contacts are provided by residues 15–20 (DHGKTT) and 128–131 (NKID).

It belongs to the TRAFAC class translation factor GTPase superfamily. Classic translation factor GTPase family. BipA subfamily. As to quaternary structure, monomer.

The protein resides in the cytoplasm. The catalysed reaction is GTP + H2O = GDP + phosphate + H(+). In terms of biological role, a 50S ribosomal subunit assembly protein with GTPase activity, required for 50S subunit assembly at low temperatures, may also play a role in translation. Binds GTP and analogs. Binds the 70S ribosome between the 30S and 50S subunits, in a similar position as ribosome-bound EF-G; it contacts a number of ribosomal proteins, both rRNAs and the A-site tRNA. The sequence is that of Large ribosomal subunit assembly factor BipA from Buchnera aphidicola subsp. Schizaphis graminum (strain Sg).